We begin with the raw amino-acid sequence, 204 residues long: Viral interleukin-6 homolog (204 aa).

A signal peptide spans 1–22 (MRWFKLWSILLVGSLLVSGTRG).

The protein belongs to the IL-6 superfamily. Interacts with host IL6ST.

Initiates signal transduction through binding to interleukin-6 receptor subunit beta IL6ST, independently of the cognate IL6 receptor IL6R. In infected primary effusion lymphoma cells, promotes proliferation of cells, protects them from apoptosis, and promotes immune evasion of interferon activity. Also drives blood to lymphatic endothelial cell differentiation. This Homo sapiens (Human) protein is Viral interleukin-6 homolog (K2).